The following is a 207-amino-acid chain: Outer-membrane lipoprotein LolB (207 aa).

An N-terminal signal peptide occupies residues 1–21; that stretch reads MTLPDFRLIRLLPLASLVLTA. Residue Cys-22 is the site of N-palmitoyl cysteine attachment. A lipid anchor (S-diacylglycerol cysteine) is attached at Cys-22.

Belongs to the LolB family. In terms of assembly, monomer.

The protein localises to the cell outer membrane. Functionally, plays a critical role in the incorporation of lipoproteins in the outer membrane after they are released by the LolA protein. In Salmonella arizonae (strain ATCC BAA-731 / CDC346-86 / RSK2980), this protein is Outer-membrane lipoprotein LolB.